The sequence spans 273 residues: MHEAQIRVAIAGAGGRMGRQLIQAAMAMEGVQLGAALEREGSSLLGSDAGELAGVGKSGVIVQSSLEAVKDDFDVFIDFTRPEGTLTHLAFCRQHGKGMVIGTTGFDDAGKQAIREASQEIAIVFAANFSVGVNVMLKLLEKAAKVMGDYSDIEIIEAHHRHKVDAPSGTALAMGEAIAGALDKNLKDCAVYSREGYTGERVPGTIGFATVRAGDIVGEHTAMFADIGERVEITHKASSRMTFANGALRSALWLKTKKNGLFDMRDVLGLDVL.

NAD(+)-binding positions include 12-17 and Glu38; that span reads GAGGRM. Arg39 is a binding site for NADP(+). Residues 102–104 and 126–129 contribute to the NAD(+) site; these read GTT and AANF. The active-site Proton donor/acceptor is the His159. His160 contributes to the (S)-2,3,4,5-tetrahydrodipicolinate binding site. Lys163 (proton donor) is an active-site residue. 169–170 serves as a coordination point for (S)-2,3,4,5-tetrahydrodipicolinate; it reads GT.

It belongs to the DapB family. Homotetramer.

It localises to the cytoplasm. It catalyses the reaction (S)-2,3,4,5-tetrahydrodipicolinate + NAD(+) + H2O = (2S,4S)-4-hydroxy-2,3,4,5-tetrahydrodipicolinate + NADH + H(+). It carries out the reaction (S)-2,3,4,5-tetrahydrodipicolinate + NADP(+) + H2O = (2S,4S)-4-hydroxy-2,3,4,5-tetrahydrodipicolinate + NADPH + H(+). Its pathway is amino-acid biosynthesis; L-lysine biosynthesis via DAP pathway; (S)-tetrahydrodipicolinate from L-aspartate: step 4/4. Its function is as follows. Catalyzes the conversion of 4-hydroxy-tetrahydrodipicolinate (HTPA) to tetrahydrodipicolinate. In Salmonella gallinarum (strain 287/91 / NCTC 13346), this protein is 4-hydroxy-tetrahydrodipicolinate reductase.